The sequence spans 86 residues: MRGRMKTLSEIKEILRKHKKELKENYKVKSIAIFGSYARGEQKETSDIDIMVEFYETPDYLKFFELEDYLENILNIKVDLITKNSI.

The short motif at 35 to 49 (GSYARGEQKETSDID) is the GSX(10)DXD motif element. Aspartate 47, aspartate 49, and aspartate 79 together coordinate Mg(2+).

This sequence belongs to the MntA antitoxin family. In terms of assembly, probably forms a complex with cognate toxin MJ1216. It depends on Mg(2+) as a cofactor.

The enzyme catalyses L-tyrosyl-[protein] + ATP = O-(5'-adenylyl)-L-tyrosyl-[protein] + diphosphate. It carries out the reaction O-(5'-adenylyl)-L-tyrosyl-[protein] + ATP = O-[5'-(adenylyl-(5'-&gt;3')-adenylyl)]-L-tyrosyl-[protein] + diphosphate. In terms of biological role, probable antitoxin component of a putative type VII toxin-antitoxin (TA) system. Neutralizes cognate toxic MJ1216 by di-AMPylation. In Methanocaldococcus jannaschii (strain ATCC 43067 / DSM 2661 / JAL-1 / JCM 10045 / NBRC 100440) (Methanococcus jannaschii), this protein is Putative protein adenylyltransferase MJ1215.